Here is a 170-residue protein sequence, read N- to C-terminus: Fimbrial protein (170 aa).

Positions 1 to 7 (MNTLQKG) are cleaved as a propeptide — leader sequence. Phe8 is subject to N-methylphenylalanine. Residues 8-28 (FTLIELMIVIAIVGILAAVAL) form a helical membrane-spanning segment. Ser70 is a glycosylation site (O-linked (Gal...) serine). Ser100 is subject to O-(sn-1-glycerophosphoryl)serine. Residues Cys127 and Cys163 are joined by a disulfide bond.

This sequence belongs to the N-Me-Phe pilin family. As to quaternary structure, the pili are polar flexible filaments of about 5.4 nanometers diameter and 2.5 micrometers average length; they consist of only a single polypeptide chain arranged in a helical configuration of five subunits per turn in the assembled pilus. In terms of processing, O-linked glycan has been reported to consist either of the Gal(alpha1-3) GlcNAc disaccharide, or the Gal(beta 1-4) Gal(alpha 1-3) 2,4-diacetamido-2,4,6-trideoxyhexose trisaccharide.

The protein localises to the fimbrium. The protein resides in the membrane. Functionally, major component of the type IV pilus (T4P) that plays a role in cellular adherence, microcolony formation as well as twitching motility. The polypeptide is Fimbrial protein (pilE) (Neisseria meningitidis serogroup B (strain ATCC BAA-335 / MC58)).